The following is a 165-amino-acid chain: Small ribosomal subunit protein uS5 (165 aa).

The S5 DRBM domain occupies 13-76 (LEEKVLVVNR…DAARKNLVSI (64 aa)).

Belongs to the universal ribosomal protein uS5 family. In terms of assembly, part of the 30S ribosomal subunit. Contacts proteins S4 and S8.

In terms of biological role, with S4 and S12 plays an important role in translational accuracy. Located at the back of the 30S subunit body where it stabilizes the conformation of the head with respect to the body. The polypeptide is Small ribosomal subunit protein uS5 (Chlamydia muridarum (strain MoPn / Nigg)).